The chain runs to 266 residues: PTS system sorbose-specific EIIC component (266 aa).

In terms of domain architecture, PTS EIIC type-4 spans 1 to 237 (MEISTLQIIA…GGVGVIIALI (237 aa)). Helical transmembrane passes span 3–23 (ISTL…MGSV), 33–53 (LIAC…VMLG), 79–99 (IISA…IAIA), 100–120 (LPVA…TVVF), 151–171 (VAIP…SSML), 183–203 (QIAG…MMGV), and 219–239 (YLDF…LIYI).

The protein resides in the cell inner membrane. In terms of biological role, the phosphoenolpyruvate-dependent sugar phosphotransferase system (PTS), a major carbohydrate active transport system, catalyzes the phosphorylation of incoming sugar substrates concomitant with their translocation across the cell membrane. The enzyme II SorABFM PTS system is involved in L-sorbose transport. This Klebsiella pneumoniae protein is PTS system sorbose-specific EIIC component.